A 195-amino-acid chain; its full sequence is Peroxiredoxin bcp1 (195 aa).

One can recognise a Thioredoxin domain in the interval 46–168 (IQVGDVIPDI…SHWIFEKGTG (123 aa)). The active-site Cysteine sulfenic acid (-SOH) intermediate is the Cys89. Cys89 and Cys94 are oxidised to a cystine.

Belongs to the peroxiredoxin family. BCP/PrxQ subfamily. Monomer. The active site is a conserved redox-active cysteine residue, the peroxidatic cysteine (C(P)), which makes the nucleophilic attack on the peroxide substrate. The peroxide oxidizes the C(P)-SH to cysteine sulfenic acid (C(P)-SOH), which then reacts with another cysteine residue, the resolving cysteine (C(R)), to form a disulfide bridge. The disulfide is subsequently reduced by an appropriate electron donor to complete the catalytic cycle. In this atypical 2-Cys peroxiredoxin, C(R) is present in the same subunit to form an intramolecular disulfide. The disulfide is subsequently reduced by thioredoxin.

The protein resides in the cytoplasm. The protein localises to the nucleus. It carries out the reaction a hydroperoxide + [thioredoxin]-dithiol = an alcohol + [thioredoxin]-disulfide + H2O. Thiol-specific peroxidase that catalyzes the reduction of hydrogen peroxide and organic hydroperoxides to water and alcohols, respectively. Plays a role in cell protection against oxidative stress by detoxifying peroxides and as sensor of hydrogen peroxide-mediated signaling events. Acts as a scavenger of H(2)O(2). This Schizosaccharomyces pombe (strain 972 / ATCC 24843) (Fission yeast) protein is Peroxiredoxin bcp1 (bcp1).